Here is a 653-residue protein sequence, read N- to C-terminus: Fidgetin-like protein 2 (653 aa).

3 disordered regions span residues 1 to 36 (MHWTPEHAQPLNQWPEQHLDVSSTTPSPAHKLELPP), 86 to 129 (ASFL…SGAL), and 216 to 240 (YGALPPPPGPPPAPYLTPGLPAPTP). Over residues 10 to 27 (PLNQWPEQHLDVSSTTPS) the composition is skewed to polar residues. Over residues 97–107 (EPWPGPEPPYP) the composition is skewed to pro residues. The segment covering 119–129 (KSGGGGGSGAL) has biased composition (gly residues). Pro residues predominate over residues 219–240 (LPPPPGPPPAPYLTPGLPAPTP). Residues A395 and 435–440 (GAGKAL) each bind ATP.

It belongs to the AAA ATPase family. Mg(2+) is required as a cofactor.

The protein localises to the cytoplasm. It is found in the cell cortex. It carries out the reaction ATP + H2O = ADP + phosphate + H(+). Microtubule-severing enzyme that negatively regulates cell migration and wound healing. In migrating cells, targets dynamic microtubules (MTs) at the leading edge and severs them, thereby suppressing motility. Microtubule severing releases ARHGEF2 which activates RHOA, which in turn regulates focal ahesion turnover via focal adhesion kinase, as opposed to F-actin polymerization, to suppress cell motility. Negative regulator of axon regeneration that suppresses axonal growth by selectively severing dynamic MTs in the distal axon shaft and growth cone. Contributes to proper cell branching during endothelial and neuronal development. This chain is Fidgetin-like protein 2, found in Homo sapiens (Human).